Reading from the N-terminus, the 626-residue chain is tRNA uridine 5-carboxymethylaminomethyl modification enzyme MnmG (626 aa).

Glycine 13–glycine 18 is a binding site for FAD. Residue glycine 273–phenylalanine 287 participates in NAD(+) binding.

Belongs to the MnmG family. In terms of assembly, homodimer. Heterotetramer of two MnmE and two MnmG subunits. Requires FAD as cofactor.

The protein resides in the cytoplasm. NAD-binding protein involved in the addition of a carboxymethylaminomethyl (cmnm) group at the wobble position (U34) of certain tRNAs, forming tRNA-cmnm(5)s(2)U34. This is tRNA uridine 5-carboxymethylaminomethyl modification enzyme MnmG from Acinetobacter baylyi (strain ATCC 33305 / BD413 / ADP1).